Here is a 503-residue protein sequence, read N- to C-terminus: Probable cytochrome P450 303a1 (503 aa).

Cys-448 is a binding site for heme.

This sequence belongs to the cytochrome P450 family. Requires heme as cofactor.

The protein resides in the endoplasmic reticulum membrane. Its subcellular location is the microsome membrane. In terms of biological role, may be involved in the metabolism of insect hormones and in the breakdown of synthetic insecticides. This Drosophila melanogaster (Fruit fly) protein is Probable cytochrome P450 303a1 (Cyp303a1).